A 322-amino-acid chain; its full sequence is Aspartate carbamoyltransferase catalytic subunit (322 aa).

Carbamoyl phosphate contacts are provided by arginine 65 and threonine 66. An L-aspartate-binding site is contributed by lysine 93. 3 residues coordinate carbamoyl phosphate: arginine 115, histidine 143, and glutamine 146. 2 residues coordinate L-aspartate: arginine 176 and arginine 230. Residues glycine 271 and proline 272 each coordinate carbamoyl phosphate.

This sequence belongs to the aspartate/ornithine carbamoyltransferase superfamily. ATCase family. Heterododecamer (2C3:3R2) of six catalytic PyrB chains organized as two trimers (C3), and six regulatory PyrI chains organized as three dimers (R2).

The enzyme catalyses carbamoyl phosphate + L-aspartate = N-carbamoyl-L-aspartate + phosphate + H(+). The protein operates within pyrimidine metabolism; UMP biosynthesis via de novo pathway; (S)-dihydroorotate from bicarbonate: step 2/3. In terms of biological role, catalyzes the condensation of carbamoyl phosphate and aspartate to form carbamoyl aspartate and inorganic phosphate, the committed step in the de novo pyrimidine nucleotide biosynthesis pathway. The chain is Aspartate carbamoyltransferase catalytic subunit from Brucella canis (strain ATCC 23365 / NCTC 10854 / RM-666).